The chain runs to 308 residues: Probable GTP 3',8-cyclase (308 aa).

The 219-residue stretch at Arg-4–Arg-222 folds into the Radical SAM core domain. A GTP-binding site is contributed by Arg-13. [4Fe-4S] cluster contacts are provided by Cys-20, Cys-24, and Cys-27. A GTP-binding site is contributed by Lys-60. Residue Gly-64 coordinates S-adenosyl-L-methionine. Residue Thr-90 coordinates GTP. Ser-114 is a binding site for S-adenosyl-L-methionine. Lys-151 contacts GTP. [4Fe-4S] cluster is bound by residues Cys-245 and Cys-248. Arg-250–Arg-252 serves as a coordination point for GTP. Cys-262 contributes to the [4Fe-4S] cluster binding site.

The protein belongs to the radical SAM superfamily. MoaA family. It depends on [4Fe-4S] cluster as a cofactor.

It carries out the reaction GTP + AH2 + S-adenosyl-L-methionine = (8S)-3',8-cyclo-7,8-dihydroguanosine 5'-triphosphate + 5'-deoxyadenosine + L-methionine + A + H(+). Its pathway is cofactor biosynthesis; molybdopterin biosynthesis. Catalyzes the cyclization of GTP to (8S)-3',8-cyclo-7,8-dihydroguanosine 5'-triphosphate. The chain is Probable GTP 3',8-cyclase from Saccharolobus solfataricus (strain ATCC 35092 / DSM 1617 / JCM 11322 / P2) (Sulfolobus solfataricus).